Reading from the N-terminus, the 280-residue chain is Pantothenate synthetase (280 aa).

26–33 contributes to the ATP binding site; that stretch reads MGNLHEGH. H33 functions as the Proton donor in the catalytic mechanism. Q57 is a (R)-pantoate binding site. Q57 lines the beta-alanine pocket. 145–148 serves as a coordination point for ATP; it reads GKKD. Residue Q151 coordinates (R)-pantoate. Residues V174 and 182–185 each bind ATP; that span reads LSSR.

It belongs to the pantothenate synthetase family. In terms of assembly, homodimer.

Its subcellular location is the cytoplasm. The catalysed reaction is (R)-pantoate + beta-alanine + ATP = (R)-pantothenate + AMP + diphosphate + H(+). It functions in the pathway cofactor biosynthesis; (R)-pantothenate biosynthesis; (R)-pantothenate from (R)-pantoate and beta-alanine: step 1/1. Its function is as follows. Catalyzes the condensation of pantoate with beta-alanine in an ATP-dependent reaction via a pantoyl-adenylate intermediate. This is Pantothenate synthetase from Bordetella avium (strain 197N).